We begin with the raw amino-acid sequence, 386 residues long: Small ribosomal subunit protein mS31 (386 aa).

It belongs to the mitochondrion-specific ribosomal protein mS31 family. Component of the mitochondrial ribosome small subunit (28S) which comprises a 12S rRNA and about 30 distinct proteins.

The protein localises to the mitochondrion. This is Small ribosomal subunit protein mS31 (MRPS31) from Bos taurus (Bovine).